Here is a 256-residue protein sequence, read N- to C-terminus: Imidazole glycerol phosphate synthase subunit HisF (256 aa).

Residues Asp12 and Asp131 contribute to the active site.

Belongs to the HisA/HisF family. In terms of assembly, heterodimer of HisH and HisF.

The protein resides in the cytoplasm. It catalyses the reaction 5-[(5-phospho-1-deoxy-D-ribulos-1-ylimino)methylamino]-1-(5-phospho-beta-D-ribosyl)imidazole-4-carboxamide + L-glutamine = D-erythro-1-(imidazol-4-yl)glycerol 3-phosphate + 5-amino-1-(5-phospho-beta-D-ribosyl)imidazole-4-carboxamide + L-glutamate + H(+). It participates in amino-acid biosynthesis; L-histidine biosynthesis; L-histidine from 5-phospho-alpha-D-ribose 1-diphosphate: step 5/9. IGPS catalyzes the conversion of PRFAR and glutamine to IGP, AICAR and glutamate. The HisF subunit catalyzes the cyclization activity that produces IGP and AICAR from PRFAR using the ammonia provided by the HisH subunit. The sequence is that of Imidazole glycerol phosphate synthase subunit HisF from Bifidobacterium adolescentis (strain ATCC 15703 / DSM 20083 / NCTC 11814 / E194a).